Here is an 84-residue protein sequence, read N- to C-terminus: LYR motif-containing protein 4B (84 aa).

Belongs to the complex I LYR family.

In Salmo salar (Atlantic salmon), this protein is LYR motif-containing protein 4B (lyrm4b).